The sequence spans 80 residues: U1-nemetoxin-Csp1a (80 aa).

A signal peptide spans 1–20; that stretch reads MKYFVVFCVLIIAVAAFTSA. The propeptide occupies 21 to 41; it reads AEDGEVFEENPLEFPKTIQKR. Intrachain disulfides connect Cys42-Cys56, Cys49-Cys60, Cys55-Cys77, and Cys66-Cys73.

It belongs to the neurotoxin 13 (insecticidal toxin ABC) family. 02 (Calisoga) subfamily. As to expression, expressed by the venom gland.

It is found in the secreted. In terms of biological role, causes paralysis to insect larvae (H.virescens). This toxin is active only on insects. The chain is U1-nemetoxin-Csp1a from Calisoga sp. (Spider).